Here is a 784-residue protein sequence, read N- to C-terminus: LPS-assembly protein LptD (784 aa).

A signal peptide spans 1-24 (MKKRIPTLLATMIASALYSHQGLA). 2 disulfide bridges follow: Cys-31/Cys-724 and Cys-173/Cys-725.

It belongs to the LptD family. As to quaternary structure, component of the lipopolysaccharide transport and assembly complex. Interacts with LptE and LptA. Contains two intramolecular disulfide bonds.

It is found in the cell outer membrane. Its function is as follows. Together with LptE, is involved in the assembly of lipopolysaccharide (LPS) at the surface of the outer membrane. The protein is LPS-assembly protein LptD of Salmonella typhi.